Reading from the N-terminus, the 315-residue chain is Olfactory receptor 2V2 (315 aa).

Residues 1-26 (METWVNQSYTDGFFLLGIFSHSTADL) are Extracellular-facing. The N-linked (GlcNAc...) asparagine glycan is linked to N6. A helical transmembrane segment spans residues 27-50 (VLFSVVMAVFTVALCGNVLLIFLI). At 51-58 (YMDPHLHT) the chain is on the cytoplasmic side. Residues 59 to 80 (PMYFFLSQLSLMDLMLVCTNVP) traverse the membrane as a helical segment. Topologically, residues 81 to 101 (KMAANFLSGRKSISFVGCGIQ) are extracellular. Residues C98 and C190 are joined by a disulfide bond. A helical transmembrane segment spans residues 102–121 (IGLFVCLVGSEGLLLGLMAY). Over 122 to 140 (DRYVAISHPLHYPILMNQR) the chain is Cytoplasmic. A helical transmembrane segment spans residues 141–159 (VCLQITGSSWAFGIIDGLI). The Extracellular segment spans residues 160–196 (QMVVVMNFPYCGLRKVNHFFCEMLSLLKLACVDTSLF). The chain crosses the membrane as a helical span at residues 197 to 220 (EKVIFACCVFMLLFPFSIIVASYA). The Cytoplasmic portion of the chain corresponds to 221-237 (HILGTVLQMHSAQAWKK). Residues 238–260 (ALATCSSHLTAVTLFYGAAMFIY) form a helical membrane-spanning segment. The Extracellular portion of the chain corresponds to 261-273 (LRPRHYRAPSHDK). The chain crosses the membrane as a helical span at residues 274 to 293 (VASIFYTVLTPMLNPLIYSL). The Cytoplasmic portion of the chain corresponds to 294 to 315 (RNREVMGALRKGLDRCRIGSQH).

It belongs to the G-protein coupled receptor 1 family.

Its subcellular location is the cell membrane. In terms of biological role, odorant receptor. This Homo sapiens (Human) protein is Olfactory receptor 2V2 (OR2V2).